The sequence spans 212 residues: Adenylate kinase (212 aa).

10-15 (GAGKGT) contacts ATP. Residues 30-59 (STGDMFRAAMANQTEMGRLAKSYIDKGELV) form an NMP region. AMP-binding positions include threonine 31, arginine 36, 57 to 59 (ELV), 86 to 89 (GYPR), and glutamine 93. Positions 127-159 (GRIINRKTGETFHKVFNPPVDYKEEDYYQREDD) are LID. Residues arginine 128 and 137–138 (TF) contribute to the ATP site. Positions 156 and 167 each coordinate AMP. Residue glutamine 195 coordinates ATP.

The protein belongs to the adenylate kinase family. Monomer.

The protein resides in the cytoplasm. The catalysed reaction is AMP + ATP = 2 ADP. It participates in purine metabolism; AMP biosynthesis via salvage pathway; AMP from ADP: step 1/1. Catalyzes the reversible transfer of the terminal phosphate group between ATP and AMP. Plays an important role in cellular energy homeostasis and in adenine nucleotide metabolism. This is Adenylate kinase from Streptococcus pyogenes serotype M1.